A 570-amino-acid chain; its full sequence is Sulfite reductase [NADPH] hemoprotein beta-component (570 aa).

[4Fe-4S] cluster-binding residues include cysteine 434, cysteine 440, cysteine 479, and cysteine 483. A siroheme-binding site is contributed by cysteine 483.

It belongs to the nitrite and sulfite reductase 4Fe-4S domain family. In terms of assembly, alpha(8)-beta(8). The alpha component is a flavoprotein, the beta component is a hemoprotein. Siroheme serves as cofactor. It depends on [4Fe-4S] cluster as a cofactor.

It carries out the reaction hydrogen sulfide + 3 NADP(+) + 3 H2O = sulfite + 3 NADPH + 4 H(+). It functions in the pathway sulfur metabolism; hydrogen sulfide biosynthesis; hydrogen sulfide from sulfite (NADPH route): step 1/1. In terms of biological role, component of the sulfite reductase complex that catalyzes the 6-electron reduction of sulfite to sulfide. This is one of several activities required for the biosynthesis of L-cysteine from sulfate. This chain is Sulfite reductase [NADPH] hemoprotein beta-component, found in Escherichia coli O1:K1 / APEC.